Reading from the N-terminus, the 715-residue chain is MDTSSNVFHYQVLWTSDKAKKVKVWKDGTMRFHSFNNRGILYDSDNRVVDDFFLNNKRIVLDSEIEFNRTIVYVENLQTTTEANIPPIPRKSKLSETGKRPAYLLKPFQPPFHSANSDVSNNSNGALSSNMLKTHAHHTNSTKSTIFRNANLQSYGVDDSDIGSLRCSSKHQLSVTPEIQPKAKFRPNSYLASSVEESNRANNTSPYPPSNSSVTALPKPSKIAYIPVLSKPKSFNGTLVEDPVEEFGEDDIASDFFSSPSADLEADDFTTLNNSNAGHLLQNLSNDNVSVSVKALENGNEEVSNNHARSPHSSRACNTIPSNKNDGLNDDHQRQDSSVAEPSPTSKRLRLTRLPLPLLRKPTGKRQNFINITVTDPSKNLYERSVKTAAELASLQNVTETTDNEIPNSPDFLDAASEEDEHIPSLDSSSLLTPLALPNKKAFQPVKFRVPSFSSPLVKPASSSSFGRSHSHLGTSLRSNELNGSSASSSIFLQSNNAVNPNVSPSTVLEHAKHPSLAKHSGVSLRTGLLIYPKYANGSKRKDGFGATSIISSGEHSSLPKNSKSRNVSVFSSPFNVPSFTVSSSDQVQKKKGNVPNAIETDSSPSDTISSSPTVRAVNLSPSKNQKPPKILTKIPDIFSKAGKKSPILPTFQESCSLPIEPFSSNITDLPFVNTVTLASTSSKIKRAKLKMLKFKHAMTTQGRDLDSDEDGDFI.

Disordered regions lie at residues 192–216 (ASSV…SVTA), 300–348 (NEEV…TSKR), 461–481 (ASSS…RSNE), and 580–630 (FTVS…KPPK). Over residues 202–213 (NNTSPYPPSNSS) the composition is skewed to low complexity. Polar residues-rich tracts occupy residues 301 to 326 (EEVS…NKND) and 472 to 481 (HLGTSLRSNE). Positions 601-614 (TDSSPSDTISSSPT) are enriched in low complexity.

This is an uncharacterized protein from Schizosaccharomyces pombe (strain 972 / ATCC 24843) (Fission yeast).